A 395-amino-acid chain; its full sequence is G-protein coupled receptor 182 (395 aa).

The Extracellular portion of the chain corresponds to 1–53 (MSVIPSPRPVSTLEPDNDFRDIHNWTELLHLFNQTFTDCHIEFNENTKHVVLF). Asn24 and Asn33 each carry an N-linked (GlcNAc...) asparagine glycan. Residues 54–75 (VFYLAIFVVGLVENVLVICVNC) form a helical membrane-spanning segment. The Cytoplasmic segment spans residues 76 to 86 (RRSGRVGMLNL). The chain crosses the membrane as a helical span at residues 87 to 109 (YILNMAIADLGIILSLPVWMLEV). The Extracellular segment spans residues 110–123 (MLEYTWLWGSFSCR). Residues Cys122 and Cys198 are joined by a disulfide bond. The helical transmembrane segment at 124–145 (FIHYFYLVNMYSSIFFLTCLSI) threads the bilayer. At 146 to 166 (DRYVTLTNTSPSWQRHQHRIR) the chain is on the cytoplasmic side. The helical transmembrane segment at 167 to 189 (RAVCAGVWVLSAIIPLPEVVHIQ) threads the bilayer. Residues 190–213 (LLDGSEPMCLFLAPFETYSAWALA) lie on the Extracellular side of the membrane. Residues 214-235 (VALSATILGFLLPFLLIAVFNI) form a helical membrane-spanning segment. Topologically, residues 236-254 (LTACRLRRQRQTESRRHCL) are cytoplasmic. Residues 255–276 (LMWAYIVVFAICWLPYQVTMLL) form a helical membrane-spanning segment. Residues 277–295 (LTLHGTHIFLHCHLVNLLY) are Extracellular-facing. A helical membrane pass occupies residues 296–316 (FFYEIIDCFSMLHCVANPILY). Residues 317-395 (NFLSPSFRGR…QTPHLHSAIL (79 aa)) are Cytoplasmic-facing. At Ser329 the chain carries Phosphoserine.

The protein belongs to the G-protein coupled receptor 1 family. As to expression, expressed in liver and lung.

It localises to the cell membrane. Orphan receptor. The sequence is that of G-protein coupled receptor 182 (Gpr182) from Mus musculus (Mouse).